The chain runs to 109 residues: UPF0060 membrane protein ABO_1373 (109 aa).

4 consecutive transmembrane segments (helical) span residues 1 to 21, 33 to 53, 63 to 83, and 87 to 107; these read MLALYTLGLFILTAVTEIVGC, PGWVLLPAAASLAMFAWLLSL, AAYGGVYVFVALLWLWGVEGV, and PWDFVGVAVALAGMGIIMFAP.

This sequence belongs to the UPF0060 family.

It localises to the cell inner membrane. This Alcanivorax borkumensis (strain ATCC 700651 / DSM 11573 / NCIMB 13689 / SK2) protein is UPF0060 membrane protein ABO_1373.